A 106-amino-acid polypeptide reads, in one-letter code: YcgL domain-containing protein HCH_02617 (106 aa).

The YcgL domain maps to 6-90; that stretch reads RLISIFRSSK…VQDDYMMDVV (85 aa).

The chain is YcgL domain-containing protein HCH_02617 from Hahella chejuensis (strain KCTC 2396).